The primary structure comprises 1070 residues: DNA-directed RNA polymerase subunit beta (1070 aa).

It belongs to the RNA polymerase beta chain family. As to quaternary structure, in plastids the minimal PEP RNA polymerase catalytic core is composed of four subunits: alpha, beta, beta', and beta''. When a (nuclear-encoded) sigma factor is associated with the core the holoenzyme is formed, which can initiate transcription.

It is found in the plastid. It localises to the chloroplast. It carries out the reaction RNA(n) + a ribonucleoside 5'-triphosphate = RNA(n+1) + diphosphate. Its function is as follows. DNA-dependent RNA polymerase catalyzes the transcription of DNA into RNA using the four ribonucleoside triphosphates as substrates. This chain is DNA-directed RNA polymerase subunit beta, found in Illicium oligandrum (Star anise).